The sequence spans 808 residues: Protein tortoise (808 aa).

The stretch at 43-78 (KDRKELYSLNNDSIKKKLNQLKDETNQLLKERGEEL) forms a coiled coil. The segment at 152-171 (LTSGGANKKKSPFLEDNNNK) is disordered. Residues 694–733 (EDLDFQIEELELMIKNKKILEREIKAHNEKISKIIKDSRD) are a coiled coil.

It localises to the mitochondrion. Functionally, required for efficient chemotaxis. The polypeptide is Protein tortoise (torA) (Dictyostelium discoideum (Social amoeba)).